We begin with the raw amino-acid sequence, 248 residues long: uncharacterized protein (248 aa).

The first 22 residues, 1–22 (MNKLQSYFIASVLYVMTPHAFA), serve as a signal peptide directing secretion.

It to E.coli YjbG.

This is an uncharacterized protein from Escherichia coli (strain K12).